A 160-amino-acid polypeptide reads, in one-letter code: Protein max (160 aa).

Residues 1 to 13 (MSDNDDIEVESDE) are compositionally biased toward acidic residues. Residues 1–40 (MSDNDDIEVESDEEQPRFQSAADKRAHHNALERKRRDHIK) are disordered. Position 2 is an N-acetylserine (S2). Residues S2 and S11 each carry the phosphoserine modification. The region spanning 23-74 (DKRAHHNALERKRRDHIKDSFHSLRDSVPSLQGEKASRAQILDKATEYIQYM) is the bHLH domain. Residues 29 to 40 (NALERKRRDHIK) show a composition bias toward basic and acidic residues. K66 is modified (N6-acetyllysine). The leucine-zipper stretch occupies residues 81 to 102 (HQQDIDDLKRQNALLEQQVRAL). The tract at residues 105–160 (ARSSAQLQTNYPSSDNSLYTNAKGGTISAFDGGSDSSSESEPEEPQNRKKLRMEAS) is disordered. S107 is modified (phosphoserine). Positions 107–124 (SSAQLQTNYPSSDNSLYT) are enriched in polar residues. N6-acetyllysine occurs at positions 153 and 154.

This sequence belongs to the MAX family. As to quaternary structure, efficient DNA binding requires dimerization with another bHLH protein. Binds DNA as a heterodimer with MYC or MAD. Part of the E2F6.com-1 complex in G0 phase composed of E2F6, MGA, MAX, TFDP1, CBX3, BAT8, EUHMTASE1, RING1, RNF2, MBLR, L3MBTL2 and YAF2. Component of some MLL1/MLL complex, at least composed of the core components KMT2A/MLL1, ASH2L, HCFC1/HCF1, WDR5 and RBBP5, as well as the facultative components BACC1, CHD8, E2F6, HSP70, INO80C, KANSL1, LAS1L, MAX, MCRS1, MGA, MYST1/MOF, PELP1, PHF20, PRP31, RING2, RUVB1/TIP49A, RUVB2/TIP49B, SENP3, TAF1, TAF4, TAF6, TAF7, TAF9 and TEX10. Interacts with SPAG9. The heterodimer MYC:MAX interacts with ABI1; the interaction may enhance MYC:MAX transcriptional activity. Post-translationally, phosphorylated.

It localises to the nucleus. Its subcellular location is the cell projection. The protein resides in the dendrite. Functionally, transcription regulator. Forms a sequence-specific DNA-binding protein complex with MYC or MAD which recognizes the core sequence 5'-CAC[GA]TG-3'. The MYC:MAX complex is a transcriptional activator, whereas the MAD:MAX complex is a repressor. May repress transcription via the recruitment of a chromatin remodeling complex containing H3 'Lys-9' histone methyltransferase activity. Represses MYC transcriptional activity from E-box elements. This chain is Protein max, found in Rattus norvegicus (Rat).